Reading from the N-terminus, the 116-residue chain is UPF0499 protein ATEG_06693 (116 aa).

Positions 1 to 18 (MKLTGLLSLALLTTLALA) are cleaved as a signal peptide. Disulfide bonds link Cys32–Cys46, Cys36–Cys49, and Cys42–Cys54.

The protein belongs to the UPF0499 family.

It is found in the secreted. The protein is UPF0499 protein ATEG_06693 of Aspergillus terreus (strain NIH 2624 / FGSC A1156).